Reading from the N-terminus, the 76-residue chain is Small ribosomal subunit protein bS18 (76 aa).

This sequence belongs to the bacterial ribosomal protein bS18 family. As to quaternary structure, part of the 30S ribosomal subunit. Forms a tight heterodimer with protein bS6.

Functionally, binds as a heterodimer with protein bS6 to the central domain of the 16S rRNA, where it helps stabilize the platform of the 30S subunit. This chain is Small ribosomal subunit protein bS18, found in Tolumonas auensis (strain DSM 9187 / NBRC 110442 / TA 4).